The sequence spans 455 residues: Tubby-like F-box protein 1 (455 aa).

The F-box domain maps to 54-112 (ETPWANLPPELLRDVIKRLEESESVWPARRHVVACASVCRSWRDMCKEIVQSPELSGKI). Residues 386–414 (QPQPQPQPQPQPQPLTQPQPSGQTDGPDK) are disordered. Over residues 388 to 402 (QPQPQPQPQPQPLTQ) the composition is skewed to pro residues.

The protein belongs to the TUB family. Ubiquitous.

The chain is Tubby-like F-box protein 1 from Arabidopsis thaliana (Mouse-ear cress).